A 227-amino-acid polypeptide reads, in one-letter code: Adapter protein MecA 1 (227 aa).

It belongs to the MecA family. As to quaternary structure, homodimer.

Its function is as follows. Enables the recognition and targeting of unfolded and aggregated proteins to the ClpC protease or to other proteins involved in proteolysis. Acts negatively in the development of competence by binding ComK and recruiting it to the ClpCP protease. When overexpressed, inhibits sporulation. Also involved in Spx degradation by ClpC. The protein is Adapter protein MecA 1 (mecA1) of Bacillus anthracis.